The primary structure comprises 31 residues: Photosystem I reaction center subunit XII (31 aa).

A helical transmembrane segment spans residues 7–26 (QVYIALLTALIPAFFALKLG).

It belongs to the PsaM family.

The protein resides in the plastid. It is found in the chloroplast thylakoid membrane. The polypeptide is Photosystem I reaction center subunit XII (Euglena viridis (Cercaria viridis)).